The following is a 217-amino-acid chain: Ribosomal RNA small subunit methyltransferase G (217 aa).

Residues glycine 79, leucine 84, 102 to 104, 130 to 131, and arginine 144 contribute to the S-adenosyl-L-methionine site; these read DST and VE.

It belongs to the methyltransferase superfamily. RNA methyltransferase RsmG family.

The protein resides in the cytoplasm. In terms of biological role, specifically methylates the N7 position of a guanine in 16S rRNA. In Chlorobaculum tepidum (strain ATCC 49652 / DSM 12025 / NBRC 103806 / TLS) (Chlorobium tepidum), this protein is Ribosomal RNA small subunit methyltransferase G.